A 415-amino-acid chain; its full sequence is Proline-serine-threonine phosphatase-interacting protein 1 (415 aa).

Residues 5 to 264 form the F-BAR domain; sequence LQFRDAFWCR…TLEGCDVEGD (260 aa). Coiled coils occupy residues 94-133 and 162-215; these read LALA…KLSL and SANG…TCEA. S318 bears the Phosphoserine mark. A Phosphotyrosine; by ABL1 modification is found at Y344. The region spanning 358-415 is the SH3 domain; sequence SSAQDYRALYDYTAQNSDELDISAGDILAVILEGEDGWWTVERNGQRGFVPGSYLEKL.

In terms of assembly, homodimer. Homotrimer. Interacts (via coiled-coil domain) with CD2AP, PTPN12 and PTPN18. Interacts (via SH3 domain) with ABL1 and WAS. Interacts (via SH3 and coiled-coil domains) with MEFV (via B-box zinc finger); the interaction allows binding of MEFV to PYCARD and facilitates formation of PYCARD pyroptosomes. Interacts with DNM2 and FASLG. Interacts with CD2. Dephosphorylated on Tyr-344 by PTPN18, this event negatively regulates the association of PSTPIP1 with SH2 domain-containing proteins as tyrosine kinase. Phosphorylation of Tyr-344 is probably required for subsequent phosphorylation at other tyrosine residues. Phosphorylation is induced by activation of the EGFR and PDGFR in a ABL1 dependent manner. The phosphorylation regulates the interaction with WAS and with MEFV. As to expression, highly expressed in adult lung and spleen, and weakly expressed in testis, muscle, kidney, brain and heart. Highly expressed in spleen and thymus, moderately in lung, brain and muscle, and weakly expressed in heart and liver (at protein level).

The protein localises to the cytoplasm. Its subcellular location is the perinuclear region. It localises to the cell projection. It is found in the lamellipodium. The protein resides in the cleavage furrow. The protein localises to the cytoskeleton. Its subcellular location is the cell membrane. It localises to the uropodium. Functionally, involved in regulation of the actin cytoskeleton. May regulate WAS actin-bundling activity. Bridges the interaction between ABL1 and PTPN18 leading to ABL1 dephosphorylation. May play a role as a scaffold protein between PTPN12 and WAS and allow PTPN12 to dephosphorylate WAS. Has the potential to physically couple CD2 and CD2AP to WAS. Acts downstream of CD2 and CD2AP to recruit WAS to the T-cell:APC contact site so as to promote the actin polymerization required for synapse induction during T-cell activation. Down-regulates CD2-stimulated adhesion through the coupling of PTPN12 to CD2. Also has a role in innate immunity and the inflammatory response. Recruited to inflammasomes by MEFV. Induces formation of pyroptosomes, large supramolecular structures composed of oligomerized PYCARD dimers which form prior to inflammatory apoptosis. Binding to MEFV allows MEFV to bind to PYCARD and facilitates pyroptosome formation. Regulates endocytosis and cell migration in neutrophils. The sequence is that of Proline-serine-threonine phosphatase-interacting protein 1 (Pstpip1) from Mus musculus (Mouse).